The following is a 204-amino-acid chain: MRGTLYIVSAASGTGKSSIVNATLERDQQIALSISFTSRQPRPNERHAQHYYFVSADEFQRMIEAGDFFEYALVHDDWKGTAHQSVEPQLAAGHDVLLEIDWQGARQVRNKIPDAISIFILPPSRAALEERLRKRGQDSEEVIHRRLAAVHEEMAHYDEFDYTIINEHFETAVSEMSAIFTASRLRRQTQKVRHANLIRTLLTP.

A Guanylate kinase-like domain is found at 3 to 181 (GTLYIVSAAS…AVSEMSAIFT (179 aa)). Residue 10 to 17 (AASGTGKS) participates in ATP binding.

This sequence belongs to the guanylate kinase family.

The protein resides in the cytoplasm. It catalyses the reaction GMP + ATP = GDP + ADP. In terms of biological role, essential for recycling GMP and indirectly, cGMP. The protein is Guanylate kinase (gmk) of Xylella fastidiosa (strain 9a5c).